The following is a 245-amino-acid chain: Acyl-protein thioesterase 1 (245 aa).

Residues Ser-126, Asp-182, and His-214 each act as charge relay system in the active site.

It belongs to the AB hydrolase superfamily. AB hydrolase 2 family.

It is found in the cytoplasm. The protein resides in the nucleus. The enzyme catalyses S-hexadecanoyl-L-cysteinyl-[protein] + H2O = L-cysteinyl-[protein] + hexadecanoate + H(+). In terms of biological role, hydrolyzes fatty acids from S-acylated cysteine residues in proteins with a strong preference for palmitoylated G-alpha proteins over other acyl substrates. Mediates the deacylation of G-alpha proteins such as GPA1 in vivo, but has weak or no activity toward palmitoylated Ras proteins. Has weak lysophospholipase activity in vitro; however such activity may not exist in vivo. This is Acyl-protein thioesterase 1 from Neurospora crassa (strain ATCC 24698 / 74-OR23-1A / CBS 708.71 / DSM 1257 / FGSC 987).